A 1097-amino-acid polypeptide reads, in one-letter code: uncharacterized protein (1097 aa).

The stretch at Leu-31–His-1087 forms a coiled coil.

It belongs to the TRAFAC class myosin-kinesin ATPase superfamily. Myosin family. As to expression, specifically expressed in muscles of the head including temporalis and tensor veli palatini.

Its function is as follows. Has most probably lost the function in masticatory muscles contraction suspected for its homologs in dog (AC F1PT61) and apes. This is an uncharacterized protein from Homo sapiens (Human).